Consider the following 423-residue polypeptide: Histidine--tRNA ligase (423 aa).

Belongs to the class-II aminoacyl-tRNA synthetase family. Homodimer.

It is found in the cytoplasm. It catalyses the reaction tRNA(His) + L-histidine + ATP = L-histidyl-tRNA(His) + AMP + diphosphate + H(+). In Bacillus cytotoxicus (strain DSM 22905 / CIP 110041 / 391-98 / NVH 391-98), this protein is Histidine--tRNA ligase.